The primary structure comprises 288 residues: MSQISAKDVKELRDTTGVGMMECKKALEETGGDMQKAVEYLRKKGAAMAAKRADREASEGVVCILMSDDQKTGVILELNCETDFVARGEVFTGFANELATLALSNNCESREDLLGIKLGEAYGNETVEEALKSMTGKVGEKLELKRMARLTAEAGVLESYIHPGSQLGALIAIDTDKPAEAKALAKDLAMQVAAAAPIEVSRDAVSTELVEKEKEIYRQQALAEGKKEEFVDKIVMGRLNKYYQEVVLTEQTFIKDQNTKVSGVLDDFMKKNQAQVKVKAFVRYQLGA.

The interval 82–85 (TDFV) is involved in Mg(2+) ion dislocation from EF-Tu.

The protein belongs to the EF-Ts family.

Its subcellular location is the cytoplasm. In terms of biological role, associates with the EF-Tu.GDP complex and induces the exchange of GDP to GTP. It remains bound to the aminoacyl-tRNA.EF-Tu.GTP complex up to the GTP hydrolysis stage on the ribosome. The chain is Elongation factor Ts from Chlorobaculum tepidum (strain ATCC 49652 / DSM 12025 / NBRC 103806 / TLS) (Chlorobium tepidum).